A 147-amino-acid chain; its full sequence is Large ribosomal subunit protein uL16 (147 aa).

The protein belongs to the universal ribosomal protein uL16 family. Part of the 50S ribosomal subunit.

Binds 23S rRNA and is also seen to make contacts with the A and possibly P site tRNAs. The chain is Large ribosomal subunit protein uL16 from Caldicellulosiruptor saccharolyticus (strain ATCC 43494 / DSM 8903 / Tp8T 6331).